A 463-amino-acid polypeptide reads, in one-letter code: Chromosomal replication initiator protein DnaA (463 aa).

A domain I, interacts with DnaA modulators region spans residues 1 to 83 (MSLSLWQQCL…LRFEVGSKPI (83 aa)). Positions 83-126 (IVPVAVSSAASSGASVPPAAVRASSLARPSWERVTAQPELSYRS) are domain II. The interval 127-343 (NVNPKHTFDN…GALNRVIANA (217 aa)) is domain III, AAA+ region. ATP-binding residues include glycine 171, glycine 173, lysine 174, and threonine 175. Positions 344-463 (NFTGRAITID…FSNLIRTLSS (120 aa)) are domain IV, binds dsDNA.

It belongs to the DnaA family. In terms of assembly, oligomerizes as a right-handed, spiral filament on DNA at oriC.

It is found in the cytoplasm. In terms of biological role, plays an essential role in the initiation and regulation of chromosomal replication. ATP-DnaA binds to the origin of replication (oriC) to initiate formation of the DNA replication initiation complex once per cell cycle. Binds the DnaA box (a 9 base pair repeat at the origin) and separates the double-stranded (ds)DNA. Forms a right-handed helical filament on oriC DNA; dsDNA binds to the exterior of the filament while single-stranded (ss)DNA is stabiized in the filament's interior. The ATP-DnaA-oriC complex binds and stabilizes one strand of the AT-rich DNA unwinding element (DUE), permitting loading of DNA polymerase. After initiation quickly degrades to an ADP-DnaA complex that is not apt for DNA replication. Binds acidic phospholipids. This chain is Chromosomal replication initiator protein DnaA, found in Edwardsiella ictaluri (strain 93-146).